Consider the following 276-residue polypeptide: Adenylate kinase (276 aa).

50–55 lines the ATP pocket; sequence GAGKGT. The NMP stretch occupies residues 70-99; sequence ATGDMLRSQVAKKTPLGREAKKIMDQGGLV. Residues Thr71, Arg76, 97–99, 126–129, and Gln133 each bind AMP; these read GLV and GFPR. The interval 167-204 is LID; sequence GRLVHPASGRSYHTTFNPPKKAMTDDVTGEPLIQRSDD. Residues Arg168 and 177-178 contribute to the ATP site; that span reads SY. AMP contacts are provided by Arg201 and Arg212. Gln240 contacts ATP.

The protein belongs to the adenylate kinase family. AK2 subfamily. In terms of assembly, monomer.

It localises to the cytoplasm. It is found in the cytosol. The protein resides in the mitochondrion intermembrane space. The catalysed reaction is AMP + ATP = 2 ADP. Its function is as follows. Catalyzes the reversible transfer of the terminal phosphate group between ATP and AMP. Plays an important role in cellular energy homeostasis and in adenine nucleotide metabolism. Adenylate kinase activity is critical for regulation of the phosphate utilization and the AMP de novo biosynthesis pathways. This Pyricularia oryzae (strain 70-15 / ATCC MYA-4617 / FGSC 8958) (Rice blast fungus) protein is Adenylate kinase.